Consider the following 458-residue polypeptide: Ammonium transporter Rh type B (458 aa).

At 1–13 (MAGSSRRAGGRRL) the chain is on the cytoplasmic side. The chain crosses the membrane as a helical span at residues 14–34 (QLPLLCLLLQGATAILFAVFV). Residues 35-61 (RYNHETDAALWHWGNHSNPDNEFYFRY) lie on the Extracellular side of the membrane. Asn-49 carries N-linked (GlcNAc...) asparagine glycosylation. A helical membrane pass occupies residues 62–82 (PSFQDVHTMIFVGFGFLMAFL). The Cytoplasmic portion of the chain corresponds to 83–86 (QRYG). The helical transmembrane segment at 87–107 (FSSVGFTFLLAAFALQWSTLV) threads the bilayer. The Extracellular portion of the chain corresponds to 108-124 (QGFLHTFHGGHIHIGVE). Residues 125-145 (SMINADFCAGAVLISFGAILG) traverse the membrane as a helical segment. The Cytoplasmic portion of the chain corresponds to 146 to 149 (KTGP). The helical transmembrane segment at 150-170 (AQLLLMALLEVVLFGLNEFVL) threads the bilayer. Residues 171–178 (LSLLGVKD) lie on the Extracellular side of the membrane. A helical transmembrane segment spans residues 179 to 201 (AGGSMTIHTFGAYFGLVLSRVLY). Topologically, residues 202 to 219 (RPQLEKSKHRQSSVYHSD) are cytoplasmic. The chain crosses the membrane as a helical span at residues 220–240 (LFAMIGTIFLWIFWPSFNSAP). The Extracellular segment spans residues 241 to 251 (TPLGDGQHRTA). The chain crosses the membrane as a helical span at residues 252–272 (LNTYYSLTASTLSTFALSALV). Topologically, residues 273–282 (GRDGRLDMVH) are cytoplasmic. The chain crosses the membrane as a helical span at residues 283–303 (VQNAALAGGVVVGTSAEMMLT). Position 304 (Pro-304) is a topological domain, extracellular. A helical membrane pass occupies residues 305–325 (FGALAAGFLAGTVSTLGFKFF). The Cytoplasmic portion of the chain corresponds to 326–346 (TPILESKFKIQDTCGVHNLHG). Residues 347–367 (MPGVLGALLGVLVAGLATHDS) traverse the membrane as a helical segment. At 368–393 (YGEGLESVFPLIAEGQRSSTSQALHQ) the chain is on the extracellular side. Residues 394 to 414 (LFGLFVTLIFASVGGGLGGLL) traverse the membrane as a helical segment. Topologically, residues 415–458 (LRLPFLDSPPDSQCYEDQIYWEVPEEHADLAQGSLRPEEPDTQA) are cytoplasmic. The interval 416 to 424 (RLPFLDSPP) is interaction with ANK3. Positions 429–432 (YEDQ) match the Basolateral sorting signal motif.

It belongs to the ammonium transporter (TC 2.A.49) family. Rh subfamily. As to quaternary structure, interacts (via C-terminus) with ANK2 and ANK3; required for targeting to the basolateral membrane. Post-translationally, N-glycosylated.

It is found in the cell membrane. It localises to the basolateral cell membrane. The enzyme catalyses NH4(+)(in) = NH4(+)(out). It carries out the reaction methylamine(out) = methylamine(in). The catalysed reaction is CO2(out) = CO2(in). Ammonium transporter involved in the maintenance of acid-base homeostasis. Transports ammonium and its related derivative methylammonium across the basolateral plasma membrane of epithelial cells likely contributing to renal transepithelial ammonia transport and ammonia metabolism. May transport either NH4(+) or NH3 ammonia species predominantly mediating an electrogenic NH4(+) transport. May act as a CO2 channel providing for renal acid secretion. The sequence is that of Ammonium transporter Rh type B (RHBG) from Sus scrofa (Pig).